Reading from the N-terminus, the 199-residue chain is N-(5'-phosphoribosyl)anthranilate isomerase (199 aa).

Belongs to the TrpF family.

The catalysed reaction is N-(5-phospho-beta-D-ribosyl)anthranilate = 1-(2-carboxyphenylamino)-1-deoxy-D-ribulose 5-phosphate. It participates in amino-acid biosynthesis; L-tryptophan biosynthesis; L-tryptophan from chorismate: step 3/5. The sequence is that of N-(5'-phosphoribosyl)anthranilate isomerase from Streptococcus pneumoniae (strain ATCC BAA-255 / R6).